A 478-amino-acid chain; its full sequence is Cytochrome c-552 (478 aa).

A signal peptide spans 1–26; the sequence is MTRIKINARRIFSLLIPFFFFTSVHA. H94 is a binding site for heme c. Heme contacts are provided by C122, C125, and K126. Residues C160, C163, H164, C209, C212, and H213 each coordinate heme c. E215, Y216, K261, and Q263 together coordinate Ca(2+). Residue Y216 coordinates substrate. H264 contributes to the substrate binding site. Residues H275, C282, C285, H286, H301, C314, C317, H318, and H393 each coordinate heme c.

This sequence belongs to the cytochrome c-552 family. It depends on Ca(2+) as a cofactor. The cofactor is heme c.

It localises to the periplasm. The catalysed reaction is 6 Fe(III)-[cytochrome c] + NH4(+) + 2 H2O = 6 Fe(II)-[cytochrome c] + nitrite + 8 H(+). The protein operates within nitrogen metabolism; nitrate reduction (assimilation). Catalyzes the reduction of nitrite to ammonia, consuming six electrons in the process. The protein is Cytochrome c-552 of Escherichia coli O157:H7 (strain EC4115 / EHEC).